The primary structure comprises 56 residues: Cruciferin (56 aa).

Thr-45 is subject to Phosphothreonine.

The protein belongs to the 11S seed storage protein (globulins) family. Hexamer; each subunit is composed of an acidic and a basic chain derived from a single precursor and linked by a disulfide bond.

In terms of biological role, this is a seed storage protein. This chain is Cruciferin, found in Sinapis alba (White mustard).